The chain runs to 420 residues: Serine hydroxymethyltransferase (420 aa).

(6S)-5,6,7,8-tetrahydrofolate contacts are provided by residues Leu121 and 125–127 (GHL). Residue Lys230 is modified to N6-(pyridoxal phosphate)lysine. 354–356 (SPF) is a (6S)-5,6,7,8-tetrahydrofolate binding site.

Belongs to the SHMT family. Homodimer. The cofactor is pyridoxal 5'-phosphate.

Its subcellular location is the cytoplasm. The catalysed reaction is (6R)-5,10-methylene-5,6,7,8-tetrahydrofolate + glycine + H2O = (6S)-5,6,7,8-tetrahydrofolate + L-serine. Its pathway is one-carbon metabolism; tetrahydrofolate interconversion. It participates in amino-acid biosynthesis; glycine biosynthesis; glycine from L-serine: step 1/1. In terms of biological role, catalyzes the reversible interconversion of serine and glycine with tetrahydrofolate (THF) serving as the one-carbon carrier. This reaction serves as the major source of one-carbon groups required for the biosynthesis of purines, thymidylate, methionine, and other important biomolecules. Also exhibits THF-independent aldolase activity toward beta-hydroxyamino acids, producing glycine and aldehydes, via a retro-aldol mechanism. The sequence is that of Serine hydroxymethyltransferase from Rickettsia africae (strain ESF-5).